Here is a 288-residue protein sequence, read N- to C-terminus: Rhox homeobox family member 2 (288 aa).

Residues 16–136 form a disordered region; sequence SPAVDDEKEL…GLEPGNAQQP (121 aa). The segment covering 39–48 has biased composition (acidic residues); that stretch reads VKEEEEDAQP. Residues 68 to 80 show a composition bias toward basic and acidic residues; it reads GEEKDGGGEEKDG. The homeobox DNA-binding region spans 134 to 193; the sequence is QQPNVHAFTPLQLQELERIFQREQFPSEFLRRRLARSMNVTELAVQIWFENRRAKWRRHQ. The Nuclear localization signal motif lies at 186–195; sequence RAKWRRHQRA.

This sequence belongs to the paired-like homeobox family. PEPP subfamily. As to expression, testis. Not detected in epididymis nor placenta. In testis, mainly expressed in germ cells, but also detected in somatic cells such as Sertoli cells, Leydig cells and peritubular cells.

The protein localises to the nucleus. Transcription factor maybe involved in reproductive processes. Modulates expression of target genes encoding proteins involved in processes relevant to spermatogenesis. The sequence is that of Rhox homeobox family member 2 from Homo sapiens (Human).